We begin with the raw amino-acid sequence, 185 residues long: Ribosome-recycling factor (185 aa).

This sequence belongs to the RRF family.

It localises to the cytoplasm. Its function is as follows. Responsible for the release of ribosomes from messenger RNA at the termination of protein biosynthesis. May increase the efficiency of translation by recycling ribosomes from one round of translation to another. This chain is Ribosome-recycling factor, found in Buchnera aphidicola subsp. Schizaphis graminum (strain Sg).